Here is a 457-residue protein sequence, read N- to C-terminus: Methylenetetrahydrofolate--tRNA-(uracil-5-)-methyltransferase TrmFO (457 aa).

7–12 (GAGLAG) contacts FAD. Residues 38 to 58 (FTSRQDEKTGTHDVRNATQTR) are disordered. Positions 40-52 (SRQDEKTGTHDVR) are enriched in basic and acidic residues.

Belongs to the MnmG family. TrmFO subfamily. The cofactor is FAD.

It is found in the cytoplasm. It catalyses the reaction uridine(54) in tRNA + (6R)-5,10-methylene-5,6,7,8-tetrahydrofolate + NADH + H(+) = 5-methyluridine(54) in tRNA + (6S)-5,6,7,8-tetrahydrofolate + NAD(+). The catalysed reaction is uridine(54) in tRNA + (6R)-5,10-methylene-5,6,7,8-tetrahydrofolate + NADPH + H(+) = 5-methyluridine(54) in tRNA + (6S)-5,6,7,8-tetrahydrofolate + NADP(+). Its function is as follows. Catalyzes the folate-dependent formation of 5-methyl-uridine at position 54 (M-5-U54) in all tRNAs. The sequence is that of Methylenetetrahydrofolate--tRNA-(uracil-5-)-methyltransferase TrmFO from Hydrogenobaculum sp. (strain Y04AAS1).